Consider the following 152-residue polypeptide: Ribosome maturation factor RimP (152 aa).

The protein belongs to the RimP family.

Its subcellular location is the cytoplasm. Its function is as follows. Required for maturation of 30S ribosomal subunits. The polypeptide is Ribosome maturation factor RimP (Francisella tularensis subsp. tularensis (strain FSC 198)).